A 182-amino-acid chain; its full sequence is Ribosome maturation factor RimM (182 aa).

In terms of domain architecture, PRC barrel spans 99-176 (DDEYYHADLI…ELPAEIEGDT (78 aa)).

It belongs to the RimM family. In terms of assembly, binds ribosomal protein uS19.

It localises to the cytoplasm. Its function is as follows. An accessory protein needed during the final step in the assembly of 30S ribosomal subunit, possibly for assembly of the head region. Essential for efficient processing of 16S rRNA. May be needed both before and after RbfA during the maturation of 16S rRNA. It has affinity for free ribosomal 30S subunits but not for 70S ribosomes. The polypeptide is Ribosome maturation factor RimM (Rhodopseudomonas palustris (strain HaA2)).